The primary structure comprises 114 residues: uncharacterized protein (114 aa).

To E.coli YfiI and P.aeruginosa RluD.

This is an uncharacterized protein from Escherichia coli O6:H1 (strain CFT073 / ATCC 700928 / UPEC).